The chain runs to 334 residues: Protein-methionine-sulfoxide reductase catalytic subunit MsrP (334 aa).

Positions 1 to 44 form a signal peptide, tat-type signal; the sequence is MKAVNPLTENDVTPESLFNARRRTVLKMLGMSAAALSLPGAARA. Mo-molybdopterin contacts are provided by residues N88, 91 to 92, C146, T181, N233, R238, and 249 to 251; these read YE and GIK.

This sequence belongs to the MsrP family. In terms of assembly, heterodimer of a catalytic subunit (MsrP) and a heme-binding subunit (MsrQ). It depends on Mo-molybdopterin as a cofactor. Post-translationally, predicted to be exported by the Tat system. The position of the signal peptide cleavage has not been experimentally proven.

It localises to the periplasm. It carries out the reaction L-methionyl-[protein] + a quinone + H2O = L-methionyl-(S)-S-oxide-[protein] + a quinol. The enzyme catalyses L-methionyl-[protein] + a quinone + H2O = L-methionyl-(R)-S-oxide-[protein] + a quinol. Its function is as follows. Part of the MsrPQ system that repairs oxidized periplasmic proteins containing methionine sulfoxide residues (Met-O), using respiratory chain electrons. Thus protects these proteins from oxidative-stress damage caused by reactive species of oxygen and chlorine generated by the host defense mechanisms. MsrPQ is essential for the maintenance of envelope integrity under bleach stress, rescuing a wide series of structurally unrelated periplasmic proteins from methionine oxidation. The catalytic subunit MsrP is non-stereospecific, being able to reduce both (R-) and (S-) diastereoisomers of methionine sulfoxide. This chain is Protein-methionine-sulfoxide reductase catalytic subunit MsrP, found in Erwinia tasmaniensis (strain DSM 17950 / CFBP 7177 / CIP 109463 / NCPPB 4357 / Et1/99).